The chain runs to 197 residues: dITP/XTP pyrophosphatase (197 aa).

A substrate-binding site is contributed by Thr-8 to Lys-13. 2 residues coordinate Mg(2+): Glu-40 and Asp-69. Asp-69 functions as the Proton acceptor in the catalytic mechanism. Substrate is bound by residues Ser-70, Phe-154–Asp-157, Lys-177, and His-182–Arg-183.

Belongs to the HAM1 NTPase family. Homodimer. It depends on Mg(2+) as a cofactor.

It catalyses the reaction XTP + H2O = XMP + diphosphate + H(+). The enzyme catalyses dITP + H2O = dIMP + diphosphate + H(+). The catalysed reaction is ITP + H2O = IMP + diphosphate + H(+). Pyrophosphatase that catalyzes the hydrolysis of nucleoside triphosphates to their monophosphate derivatives, with a high preference for the non-canonical purine nucleotides XTP (xanthosine triphosphate), dITP (deoxyinosine triphosphate) and ITP. Seems to function as a house-cleaning enzyme that removes non-canonical purine nucleotides from the nucleotide pool, thus preventing their incorporation into DNA/RNA and avoiding chromosomal lesions. The polypeptide is dITP/XTP pyrophosphatase (Pectobacterium atrosepticum (strain SCRI 1043 / ATCC BAA-672) (Erwinia carotovora subsp. atroseptica)).